The sequence spans 239 residues: Skn-1 dependent zygotic transcript 1 protein (239 aa).

In terms of biological role, may have a role in mesendoderm development during embryogenesis. The polypeptide is Skn-1 dependent zygotic transcript 1 protein (Caenorhabditis briggsae).